The sequence spans 1403 residues: Centrosomal protein of 162 kDa (1403 aa).

Positions 20-46 (LSDDSFENSNKTPRQPNEDNKEMKKKD) are disordered. Residues 35-46 (PNEDNKEMKKKD) show a composition bias toward basic and acidic residues. Phosphoserine is present on residues S160 and S163. Disordered regions lie at residues 169 to 243 (LHRY…MLAN), 256 to 292 (VGLS…SSGD), 306 to 348 (SLGD…ESDL), and 453 to 606 (NPSL…GGNR). Acidic residues predominate over residues 178–208 (PAEDGCENESEQEELPETYSDDFEDAEDADD). A compositionally biased stretch (basic and acidic residues) spans 210–238 (LITKDEETHPKENSESGKDSFPKQEEEKT). Positions 485–500 (PCKKARSTPSLPKRKP) are enriched in basic residues. Basic and acidic residues-rich tracts occupy residues 526 to 536 (LEKKTSKDNTK) and 571 to 585 (PHRE…RPED). A coiled-coil region spans residues 614 to 1124 (KRAQDAEEKW…QKERRMMLSR (511 aa)). The tract at residues 1126-1147 (IPRSREETAAKRLKKDPNRGHG) is disordered. The span at 1128 to 1144 (RSREETAAKRLKKDPNR) shows a compositional bias: basic and acidic residues. Positions 1174 to 1386 (EENYRLRSEL…LDVLRELHRQ (213 aa)) form a coiled coil.

It belongs to the CEP162 family. Interacts with CPNE4. Interacts with alpha-tubulin. Interacts with CEP290.

The protein localises to the cytoplasm. It localises to the cytoskeleton. The protein resides in the microtubule organizing center. It is found in the centrosome. Its subcellular location is the centriole. The protein localises to the spindle. It localises to the nucleus. Its function is as follows. Required to promote assembly of the transition zone in primary cilia. Acts by specifically recognizing and binding the axonemal microtubule. Localizes to the distal ends of centrioles before ciliogenesis and directly binds to axonemal microtubule, thereby promoting and restricting transition zone formation specifically at the cilia base. Required to mediate CEP290 association with microtubules. The polypeptide is Centrosomal protein of 162 kDa (Cep162) (Mus musculus (Mouse)).